A 33-amino-acid polypeptide reads, in one-letter code: Brevinin-2E (33 aa).

A disulfide bridge links cysteine 27 with cysteine 33.

The protein belongs to the frog skin active peptide (FSAP) family. Brevinin subfamily. As to expression, expressed by the skin glands.

The protein localises to the secreted. Functionally, shows antibacterial activity against representative Gram-negative and Gram-positive bacterial species, and hemolytic activity. This Pelophylax lessonae (Pool frog) protein is Brevinin-2E.